The primary structure comprises 568 residues: PCNA-interacting partner (568 aa).

The tract at residues 442 to 555 is disordered; sequence QIPTCVHPAP…RNNKAVSKKL (114 aa). Over residues 488–500 the composition is skewed to polar residues; the sequence is NAWNQTGGKSTQP. The segment covering 515–527 has biased composition (basic and acidic residues); sequence ANRECTEQGREEN.

The protein belongs to the PARI family.

The protein localises to the cytoplasm. Its subcellular location is the nucleus. Required to suppress inappropriate homologous recombination, thereby playing a central role DNA repair and in the maintenance of genomic stability. The chain is PCNA-interacting partner (parpbp) from Danio rerio (Zebrafish).